The primary structure comprises 283 residues: MADGHSNNNHVPVLLSFSAFSRPSSVPVGSGYEVLIQKFLSLYGRQIDLHRKFMIQLYSDEWAQYIDLPKGFIISEKCKLRFVPLETDVTILGNLIPATTVFFCCDMQERFRPAIKYFGDIISVGQRLLQGARILGIPVIVSEQYPKGLGNTVQEMDLTGARLVFPKTKFSMVLPEAEAALAELPGVRSVVLFGVETHVCIQQTALDLLARGFEVHMVADSTSSRSMMDRMFALDRMARTGIIVTTSESILLQLVGDKEHPKFKEIQNIIKASAPESGLLSKV.

Belongs to the isochorismatase family.

The polypeptide is Isochorismatase domain-containing protein 1 (isoc1) (Salmo salar (Atlantic salmon)).